Here is a 204-residue protein sequence, read N- to C-terminus: Uracil-DNA glycosylase (204 aa).

The active-site Proton acceptor is Asp-47.

Belongs to the uracil-DNA glycosylase (UDG) superfamily. UNG family.

Its subcellular location is the host nucleus. It catalyses the reaction Hydrolyzes single-stranded DNA or mismatched double-stranded DNA and polynucleotides, releasing free uracil.. In terms of biological role, excises uracil residues from the DNA which can arise as a result of misincorporation of dUMP residues by DNA polymerase or deamination of cytosines. Therefore may reduce deleterious uracil incorporation into the viral genome, particularly in terminally differentiated cells which lack DNA repair enzymes. This Bos taurus (Bovine) protein is Uracil-DNA glycosylase (UL2).